Consider the following 105-residue polypeptide: Large ribosomal subunit protein bL21 (105 aa).

It belongs to the bacterial ribosomal protein bL21 family. As to quaternary structure, part of the 50S ribosomal subunit. Contacts protein L20.

Functionally, this protein binds to 23S rRNA in the presence of protein L20. This Phocaeicola vulgatus (strain ATCC 8482 / DSM 1447 / JCM 5826 / CCUG 4940 / NBRC 14291 / NCTC 11154) (Bacteroides vulgatus) protein is Large ribosomal subunit protein bL21.